The following is a 25-amino-acid chain: Caerin-1.2 (25 aa).

Leu25 is subject to Leucine amide.

Expressed by the skin parotoid and/or rostral glands.

The protein localises to the secreted. Its function is as follows. Antibacterial peptide, that adopts an alpha helical conformation which can disrupt bacterial membranes. Each caerin displays a different antimicrobial specificity. The sequence is that of Caerin-1.2 from Ranoidea caerulea (Green tree frog).